Consider the following 510-residue polypeptide: Beta-glucosidase 12 (510 aa).

The signal sequence occupies residues Met1–Gly24. Position 53 (Gln53) interacts with a beta-D-glucoside. N-linked (GlcNAc...) asparagine glycosylation is present at Asn122. Residues His157 and Asn202–Glu203 each bind a beta-D-glucoside. Catalysis depends on Glu203, which acts as the Proton donor. 2 cysteine pairs are disulfide-bonded: Cys208/Cys243 and Cys222/Cys230. Residue Asn229 is glycosylated (N-linked (GlcNAc...) asparagine). Position 346 (Tyr346) interacts with a beta-D-glucoside. 2 N-linked (GlcNAc...) asparagine glycosylation sites follow: Asn361 and Asn371. Glu417 contributes to the a beta-D-glucoside binding site. The Nucleophile role is filled by Glu417. Asn425 carries N-linked (GlcNAc...) asparagine glycosylation. A beta-D-glucoside contacts are provided by residues Trp466, Glu473 to Trp474, and Phe482.

Belongs to the glycosyl hydrolase 1 family.

The protein resides in the secreted. The enzyme catalyses Hydrolysis of terminal, non-reducing beta-D-glucosyl residues with release of beta-D-glucose.. Functionally, hydrolyzes p-nitrophenyl beta-D-glucoside, p-nitrophenyl beta-D-galactoside, p-nitrophenyl beta-D-xyloside, p-nitrophenyl beta-D-fucoside, p-nitrophenyl beta-L-arabinoside, cello-oligosaccharides and laminaribiose. This chain is Beta-glucosidase 12, found in Oryza sativa subsp. japonica (Rice).